The following is a 614-amino-acid chain: Zinc finger protein 276 (614 aa).

The tract at residues 1–46 is disordered; the sequence is MKRDRLGRFLSPGIARQRGGSGGGCGSGRTRGRPSRSGGTSADGAA. Over residues 19 to 29 the composition is skewed to gly residues; the sequence is GGSGGGCGSGR. A ZAD domain is found at 78 to 164; sequence GHCRLCHGKF…LQRVNVSPAG (87 aa). Zn(2+)-binding residues include Cys-80, Cys-83, Cys-137, and Cys-140. Residues 271–422 form a disordered region; that stretch reads RLAQNSESNP…PGPKPGWKKK (152 aa). Polar residues-rich tracts occupy residues 272 to 282 and 291 to 302; these read LAQNSESNPTG and RETQVGSETKTL. Residues 357 to 369 are compositionally biased toward acidic residues; sequence SDLSEGDFLSEDE. A compositionally biased stretch (basic and acidic residues) spans 386–408; sequence YPEKKVSGKKSEGREAKRPEEPK. A compositionally biased stretch (basic residues) spans 409–422; the sequence is IRKKPGPKPGWKKK. 5 C2H2-type zinc fingers span residues 434–458, 465–490, 496–518, 524–546, and 554–577; these read YKCP…IKEH, RPCP…KLIH, YICD…QMRH, LQCE…MTKH, and FACD…SMVH. The segment at 588–614 is disordered; that stretch reads PLEAEPPPGPLSPSGTMEGQAVKPEPT.

Found in all the examined tissues, with highest levels in kidney, liver, lung, and spleen.

It is found in the nucleus. The protein localises to the chromosome. It localises to the centromere. Its subcellular location is the kinetochore. Its function is as follows. May be involved in transcriptional regulation. In Mus musculus (Mouse), this protein is Zinc finger protein 276 (Znf276).